The sequence spans 303 residues: GTPase Era (303 aa).

In terms of domain architecture, Era-type G spans 8 to 176; that stretch reads YCGFIAIVGR…ASIVRKHMPE (169 aa). The tract at residues 16-23 is G1; sequence GRPNVGKS. 16–23 contacts GTP; it reads GRPNVGKS. The segment at 42 to 46 is G2; that stretch reads QTTRH. A G3 region spans residues 63 to 66; that stretch reads DTPG. GTP is bound by residues 63–67 and 125–128; these read DTPGL and NKVD. The interval 125–128 is G4; it reads NKVD. Residues 155-157 form a G5 region; it reads ISA. The 78-residue stretch at 207 to 284 folds into the KH type-2 domain; sequence LGEELPYSVT…HLELWVKVKS (78 aa).

This sequence belongs to the TRAFAC class TrmE-Era-EngA-EngB-Septin-like GTPase superfamily. Era GTPase family. As to quaternary structure, monomer.

It is found in the cytoplasm. The protein resides in the cell inner membrane. In terms of biological role, an essential GTPase that binds both GDP and GTP, with rapid nucleotide exchange. Plays a role in 16S rRNA processing and 30S ribosomal subunit biogenesis and possibly also in cell cycle regulation and energy metabolism. In Yersinia enterocolitica serotype O:8 / biotype 1B (strain NCTC 13174 / 8081), this protein is GTPase Era.